Consider the following 258-residue polypeptide: Aspartate/glutamate leucyltransferase (258 aa).

The protein belongs to the R-transferase family. Bpt subfamily.

The protein localises to the cytoplasm. The catalysed reaction is N-terminal L-glutamyl-[protein] + L-leucyl-tRNA(Leu) = N-terminal L-leucyl-L-glutamyl-[protein] + tRNA(Leu) + H(+). The enzyme catalyses N-terminal L-aspartyl-[protein] + L-leucyl-tRNA(Leu) = N-terminal L-leucyl-L-aspartyl-[protein] + tRNA(Leu) + H(+). Its function is as follows. Functions in the N-end rule pathway of protein degradation where it conjugates Leu from its aminoacyl-tRNA to the N-termini of proteins containing an N-terminal aspartate or glutamate. This Rhizobium johnstonii (strain DSM 114642 / LMG 32736 / 3841) (Rhizobium leguminosarum bv. viciae) protein is Aspartate/glutamate leucyltransferase.